Here is a 301-residue protein sequence, read N- to C-terminus: 4-hydroxy-tetrahydrodipicolinate synthase (301 aa).

Residue threonine 53 participates in pyruvate binding. The active-site Proton donor/acceptor is the tyrosine 142. Lysine 170 serves as the catalytic Schiff-base intermediate with substrate. Valine 212 provides a ligand contact to pyruvate.

The protein belongs to the DapA family. As to quaternary structure, homotetramer; dimer of dimers.

It is found in the cytoplasm. The enzyme catalyses L-aspartate 4-semialdehyde + pyruvate = (2S,4S)-4-hydroxy-2,3,4,5-tetrahydrodipicolinate + H2O + H(+). Its pathway is amino-acid biosynthesis; L-lysine biosynthesis via DAP pathway; (S)-tetrahydrodipicolinate from L-aspartate: step 3/4. Its function is as follows. Catalyzes the condensation of (S)-aspartate-beta-semialdehyde [(S)-ASA] and pyruvate to 4-hydroxy-tetrahydrodipicolinate (HTPA). This is 4-hydroxy-tetrahydrodipicolinate synthase from Synechocystis sp. (strain ATCC 27184 / PCC 6803 / Kazusa).